The primary structure comprises 669 residues: UvrABC system protein B (669 aa).

Residues 26 to 183 (TNFHAGIAKQ…RHLTELQYTR (158 aa)) form the Helicase ATP-binding domain. Position 39-46 (39-46 (GVTGSGKT)) interacts with ATP. The Beta-hairpin signature appears at 92–115 (YYDYYQPEAYVPASDTFIEKDSSI). The region spanning 431 to 597 (QVDDLISQIN…SVVRPISDIL (167 aa)) is the Helicase C-terminal domain. In terms of domain architecture, UVR spans 631-666 (AAQMKMLEQQMYQHARDLEFEDAARIRDQIQRLREA).

This sequence belongs to the UvrB family. As to quaternary structure, forms a heterotetramer with UvrA during the search for lesions. Interacts with UvrC in an incision complex.

The protein localises to the cytoplasm. The UvrABC repair system catalyzes the recognition and processing of DNA lesions. A damage recognition complex composed of 2 UvrA and 2 UvrB subunits scans DNA for abnormalities. Upon binding of the UvrA(2)B(2) complex to a putative damaged site, the DNA wraps around one UvrB monomer. DNA wrap is dependent on ATP binding by UvrB and probably causes local melting of the DNA helix, facilitating insertion of UvrB beta-hairpin between the DNA strands. Then UvrB probes one DNA strand for the presence of a lesion. If a lesion is found the UvrA subunits dissociate and the UvrB-DNA preincision complex is formed. This complex is subsequently bound by UvrC and the second UvrB is released. If no lesion is found, the DNA wraps around the other UvrB subunit that will check the other stand for damage. The polypeptide is UvrABC system protein B (Xylella fastidiosa (strain M12)).